The primary structure comprises 1279 residues: ATP-dependent helicase/nuclease subunit A (1279 aa).

In terms of domain architecture, UvrD-like helicase ATP-binding spans 4–499 (TKWTDEQRQA…VKLFKNFRSR (496 aa)). 25 to 32 (AGAGAGKT) contacts ATP. A UvrD-like helicase C-terminal domain is found at 526 to 853 (EEALKVGASY…RIMSIHKSKG (328 aa)).

It belongs to the helicase family. AddA subfamily. In terms of assembly, heterodimer of AddA and AddB/RexB. The cofactor is Mg(2+).

The enzyme catalyses Couples ATP hydrolysis with the unwinding of duplex DNA by translocating in the 3'-5' direction.. The catalysed reaction is ATP + H2O = ADP + phosphate + H(+). The heterodimer acts as both an ATP-dependent DNA helicase and an ATP-dependent, dual-direction single-stranded exonuclease. Recognizes the chi site generating a DNA molecule suitable for the initiation of homologous recombination. The AddA nuclease domain is required for chi fragment generation; this subunit has the helicase and 3' -&gt; 5' nuclease activities. This chain is ATP-dependent helicase/nuclease subunit A, found in Clostridium botulinum (strain Loch Maree / Type A3).